The chain runs to 65 residues: MPKMKTKSGAAKRFKVRASGGIKRSQAFKRHILTKKTTKSKRQLRGMTGVHAADEKLIRAMLPYA.

This sequence belongs to the bacterial ribosomal protein bL35 family.

This Aromatoleum aromaticum (strain DSM 19018 / LMG 30748 / EbN1) (Azoarcus sp. (strain EbN1)) protein is Large ribosomal subunit protein bL35.